We begin with the raw amino-acid sequence, 62 residues long: UPF0434 protein RHECIAT_CH0004260 (62 aa).

Belongs to the UPF0434 family.

This Rhizobium etli (strain CIAT 652) protein is UPF0434 protein RHECIAT_CH0004260.